Here is a 481-residue protein sequence, read N- to C-terminus: Phosphoglycerate kinase 1, chloroplastic (481 aa).

Residues 1-75 constitute a chloroplast transit peptide; that stretch reads MASAAASSAF…VRGKGSRGVV (75 aa). The residue at position 81 (Ser81) is a Phosphoserine. (2R)-3-phosphoglycerate-binding residues include Ala99, Asp100, Asn102, Arg116, Thr138, His139, Gly141, Arg142, Arg197, His229, and Arg230. Gly275 is a binding site for ADP. Gly275 contributes to the CDP binding site. Positions 277 and 281 each coordinate AMP. Lys281 serves as a coordination point for ATP. Residue Gly299 participates in ADP binding. Residue Gly299 participates in CDP binding. Residues Gly300 and Gly372 each coordinate AMP. Gly300 and Gly372 together coordinate ATP. CDP is bound by residues Gly397 and Phe402. Phe402 contacts ADP. Glu403 is a binding site for AMP. The ATP site is built by Glu403, Asp434, and Ser435. A Mg(2+)-binding site is contributed by Asp434.

The protein belongs to the phosphoglycerate kinase family. Monomer. Binds to FTSZ2-1 and FTSZ2-2. It depends on Mg(2+) as a cofactor.

Its subcellular location is the plastid. It localises to the chloroplast. The catalysed reaction is (2R)-3-phosphoglycerate + ATP = (2R)-3-phospho-glyceroyl phosphate + ADP. It functions in the pathway carbohydrate biosynthesis; Calvin cycle. Functionally, may trigger the phosphorylation of FTSZ2-1 and FTSZ2-2. This is Phosphoglycerate kinase 1, chloroplastic from Arabidopsis thaliana (Mouse-ear cress).